The chain runs to 331 residues: Nucleotide sugar transporter SLC35B4 (331 aa).

Transmembrane regions (helical) follow at residues Ala-4–Leu-24, Gly-30–Phe-50, Pro-59–Val-79, Leu-92–Leu-112, Ser-117–Met-137, Gly-153–Met-173, Ala-201–Phe-221, Ile-229–Thr-249, Tyr-251–Leu-267, Thr-268–Phe-288, and Pro-291–Thr-311. Positions Lys-326–Asn-331 match the Mediates endoplasmic reticulum retention motif.

The protein belongs to the nucleotide-sugar transporter family. SLC35B subfamily.

It localises to the endoplasmic reticulum membrane. It carries out the reaction UDP-N-acetyl-alpha-D-glucosamine(in) + UDP-alpha-D-glucuronate(out) = UDP-N-acetyl-alpha-D-glucosamine(out) + UDP-alpha-D-glucuronate(in). The enzyme catalyses UDP-alpha-D-xylose(in) + UDP-alpha-D-glucuronate(out) = UDP-alpha-D-xylose(out) + UDP-alpha-D-glucuronate(in). Functionally, antiporter that transports nucleotide sugars across the endoplasmic reticulum (ER) membrane in exchange for another nucleotide sugar. May couple UDP-alpha-D-glucuronate (UDP-GlcA) or UDP-alpha-D-xylose (UDP-Xyl) efflux to UDP-alpha-D-glucuronate (UDP-GlcA) influx into the ER lumen, which in turn stimulates glucuronidation and excretion of endobiotics and xenobiotics. The sequence is that of Nucleotide sugar transporter SLC35B4 (SLC35B4) from Macaca fascicularis (Crab-eating macaque).